Here is a 323-residue protein sequence, read N- to C-terminus: GDP-mannose 4,6-dehydratase (323 aa).

Residues 11 to 14 (TGQD), Arg36, 59 to 60 (DM), and 81 to 85 (LAAQS) contribute to the NADP(+) site. Thr126 is an active-site residue. Residues Glu128 and Tyr150 each act as nucleophile in the active site. Positions 154, 180, and 185 each coordinate NADP(+).

The protein belongs to the NAD(P)-dependent epimerase/dehydratase family. GDP-mannose 4,6-dehydratase subfamily. Homotetramer. NADP(+) serves as cofactor.

It catalyses the reaction GDP-alpha-D-mannose = GDP-4-dehydro-alpha-D-rhamnose + H2O. It participates in bacterial outer membrane biogenesis; lipopolysaccharide biosynthesis. Its function is as follows. Catalyzes the conversion of GDP-D-mannose to GDP-4-dehydro-6-deoxy-D-mannose. This is GDP-mannose 4,6-dehydratase from Pseudomonas aeruginosa (strain ATCC 15692 / DSM 22644 / CIP 104116 / JCM 14847 / LMG 12228 / 1C / PRS 101 / PAO1).